The primary structure comprises 103 residues: MYAVVKTGGKQYRVAAGEKLKVEQIPADIGQEITLDQVLSVGEGDQLKVGTPLVAGAVVKATVLAHGRHDKVKIFKMRRRKHYQKHQGHRQNYTEIRIEAITA.

Belongs to the bacterial ribosomal protein bL21 family. As to quaternary structure, part of the 50S ribosomal subunit. Contacts protein L20.

In terms of biological role, this protein binds to 23S rRNA in the presence of protein L20. The sequence is that of Large ribosomal subunit protein bL21 from Bordetella petrii (strain ATCC BAA-461 / DSM 12804 / CCUG 43448).